Reading from the N-terminus, the 248-residue chain is uncharacterized protein (248 aa).

A helical membrane pass occupies residues 7 to 25 (TIFIGGIYGLGVYIGAVAW).

Belongs to the methyltransferase superfamily. METL family.

Its subcellular location is the mitochondrion inner membrane. Its function is as follows. Probable methyltransferase. This is an uncharacterized protein from Schizosaccharomyces pombe (strain 972 / ATCC 24843) (Fission yeast).